Consider the following 160-residue polypeptide: Cyclic pyranopterin monophosphate synthase (160 aa).

Substrate-binding positions include 77-79 and 114-115; these read LCH and ME. The active site involves Asp-129.

This sequence belongs to the MoaC family. In terms of assembly, homohexamer; trimer of dimers.

It carries out the reaction (8S)-3',8-cyclo-7,8-dihydroguanosine 5'-triphosphate = cyclic pyranopterin phosphate + diphosphate. The protein operates within cofactor biosynthesis; molybdopterin biosynthesis. In terms of biological role, catalyzes the conversion of (8S)-3',8-cyclo-7,8-dihydroguanosine 5'-triphosphate to cyclic pyranopterin monophosphate (cPMP). This Alcanivorax borkumensis (strain ATCC 700651 / DSM 11573 / NCIMB 13689 / SK2) protein is Cyclic pyranopterin monophosphate synthase.